Here is a 666-residue protein sequence, read N- to C-terminus: ATP-dependent RNA helicase DDX51 (666 aa).

At Ala2 the chain carries N-acetylalanine. The disordered stretch occupies residues 9-152; it reads YPGPDAAAAA…AAPDGPALEE (144 aa). Residues 10-28 show a composition bias toward low complexity; the sequence is PGPDAAAAAGPEGAEAGAH. Over residues 33 to 48 the composition is skewed to basic and acidic residues; it reads ALLERLQSRARERQQQ. A compositionally biased stretch (low complexity) spans 49–58; that stretch reads REPAQTEAAA. Over residues 65–75 the composition is skewed to basic residues; the sequence is RRRRRPRRRRR. Phosphoserine is present on residues Ser83 and Ser103. The span at 97-108 shows a compositional bias: acidic residues; that stretch reads EDAGAESNEEAP. A Q motif motif is present at residues 221–229; it reads YFPVQAAVI. Residues 243–452 enclose the Helicase ATP-binding domain; sequence GRGGYRPSDL…QLGLHQPRLF (210 aa). 256–263 provides a ligand contact to ATP; sequence APTGSGKT. The DEAD box signature appears at 371–374; that stretch reads DEAD. Residues 494-640 enclose the Helicase C-terminal domain; sequence VVLHLVLEMG…RHELSSKLLQ (147 aa).

This sequence belongs to the DEAD box helicase family. DDX51/DBP6 subfamily.

It is found in the nucleus. Its subcellular location is the nucleolus. The enzyme catalyses ATP + H2O = ADP + phosphate + H(+). In terms of biological role, ATP-binding RNA helicase involved in the biogenesis of 60S ribosomal subunits. The protein is ATP-dependent RNA helicase DDX51 (DDX51) of Homo sapiens (Human).